The primary structure comprises 36 residues: Kappa-theraphotoxin-Aa1a (36 aa).

3 disulfides stabilise this stretch: cysteine 3–cysteine 18, cysteine 10–cysteine 23, and cysteine 17–cysteine 30. Isoleucine amide is present on isoleucine 36.

Belongs to the neurotoxin 10 (Hwtx-1) family. As to expression, expressed by the venom gland.

Its subcellular location is the secreted. Its function is as follows. Selective inhibitor of voltage-gated potassium channel Kv10.1/KCNH1/EAG1 (IC(50)=637 nM). It acts by shifting the voltage dependence of channel activation in a depolarising direction. It shows a 100% inhibition at saturating concentrations, shows fast on-rates and is reversible. It also slightly affects channel inactivation, when the membrane is highly depolarised (&gt;+80 mV). The sequence is that of Kappa-theraphotoxin-Aa1a from Avicularia aurantiaca (Yellow-banded pinktoe tarantula).